A 215-amino-acid chain; its full sequence is MNIIKPLTCILAMSISGLATAAVTLHVPDDVTLFVANGQKAKLSGSLFASSKTIELPNGENQIVFQYEPYFSQGNDRIGVESNVIIAKFSANDTDLNFELPKYRDHRVAEQEIKQMQWQLVDEQGAAVTKSEDKLVKSGMQIGRDYAREAADYNQTGGIAAIGTAVSVATIKTEPVANVETKVKAGDNTAEEMLHFWYDKADEATKARFKAYINQ.

The N-terminal stretch at 1–21 is a signal peptide; the sequence is MNIIKPLTCILAMSISGLATA.

Belongs to the UPF0319 family.

The sequence is that of UPF0319 protein VV2_0960 from Vibrio vulnificus (strain CMCP6).